Consider the following 91-residue polypeptide: Small ribosomal subunit protein bS18 (91 aa).

It belongs to the bacterial ribosomal protein bS18 family. Part of the 30S ribosomal subunit. Forms a tight heterodimer with protein bS6.

Its function is as follows. Binds as a heterodimer with protein bS6 to the central domain of the 16S rRNA, where it helps stabilize the platform of the 30S subunit. The protein is Small ribosomal subunit protein bS18 of Paraburkholderia phytofirmans (strain DSM 17436 / LMG 22146 / PsJN) (Burkholderia phytofirmans).